Here is a 333-residue protein sequence, read N- to C-terminus: Phosphate acyltransferase (333 aa).

The protein belongs to the PlsX family. As to quaternary structure, homodimer. Probably interacts with PlsY.

It localises to the cytoplasm. The catalysed reaction is a fatty acyl-[ACP] + phosphate = an acyl phosphate + holo-[ACP]. The protein operates within lipid metabolism; phospholipid metabolism. Functionally, catalyzes the reversible formation of acyl-phosphate (acyl-PO(4)) from acyl-[acyl-carrier-protein] (acyl-ACP). This enzyme utilizes acyl-ACP as fatty acyl donor, but not acyl-CoA. The polypeptide is Phosphate acyltransferase (Clostridium beijerinckii (strain ATCC 51743 / NCIMB 8052) (Clostridium acetobutylicum)).